The following is a 226-amino-acid chain: PKHD-type hydroxylase Bpet2704 (226 aa).

A Fe2OG dioxygenase domain is found at 78 to 178; it reads KIFPPLFNRY…RISAFFWMQS (101 aa). Residues H96, D98, and H159 each coordinate Fe cation. A 2-oxoglutarate-binding site is contributed by R169.

Fe(2+) is required as a cofactor. The cofactor is L-ascorbate.

The sequence is that of PKHD-type hydroxylase Bpet2704 from Bordetella petrii (strain ATCC BAA-461 / DSM 12804 / CCUG 43448).